The sequence spans 203 residues: Peptidyl-tRNA hydrolase (203 aa).

Tyrosine 16 contacts tRNA. Histidine 21 functions as the Proton acceptor in the catalytic mechanism. TRNA-binding residues include tyrosine 68, asparagine 70, and asparagine 116.

Belongs to the PTH family. As to quaternary structure, monomer.

It is found in the cytoplasm. The catalysed reaction is an N-acyl-L-alpha-aminoacyl-tRNA + H2O = an N-acyl-L-amino acid + a tRNA + H(+). Hydrolyzes ribosome-free peptidyl-tRNAs (with 1 or more amino acids incorporated), which drop off the ribosome during protein synthesis, or as a result of ribosome stalling. Its function is as follows. Catalyzes the release of premature peptidyl moieties from peptidyl-tRNA molecules trapped in stalled 50S ribosomal subunits, and thus maintains levels of free tRNAs and 50S ribosomes. This is Peptidyl-tRNA hydrolase from Nostoc sp. (strain PCC 7120 / SAG 25.82 / UTEX 2576).